A 253-amino-acid chain; its full sequence is 5'-nucleotidase SurE (253 aa).

Positions 8, 9, 39, and 95 each coordinate a divalent metal cation.

The protein belongs to the SurE nucleotidase family. It depends on a divalent metal cation as a cofactor.

The protein localises to the cytoplasm. The enzyme catalyses a ribonucleoside 5'-phosphate + H2O = a ribonucleoside + phosphate. Its function is as follows. Nucleotidase that shows phosphatase activity on nucleoside 5'-monophosphates. The chain is 5'-nucleotidase SurE from Chloroflexus aggregans (strain MD-66 / DSM 9485).